The sequence spans 987 residues: Leucine--tRNA ligase (987 aa).

The short motif at 69–80 (PYPSGKGLHVGH) is the 'HIGH' region element. Positions 760–764 (KMGKS) match the 'KMSKS' region motif. Residue Lys763 coordinates ATP.

It belongs to the class-I aminoacyl-tRNA synthetase family.

It is found in the cytoplasm. It catalyses the reaction tRNA(Leu) + L-leucine + ATP = L-leucyl-tRNA(Leu) + AMP + diphosphate. This is Leucine--tRNA ligase from Bifidobacterium longum (strain DJO10A).